Reading from the N-terminus, the 222-residue chain is N-(5'-phosphoribosyl)anthranilate isomerase (222 aa).

Belongs to the TrpF family.

The enzyme catalyses N-(5-phospho-beta-D-ribosyl)anthranilate = 1-(2-carboxyphenylamino)-1-deoxy-D-ribulose 5-phosphate. Its pathway is amino-acid biosynthesis; L-tryptophan biosynthesis; L-tryptophan from chorismate: step 3/5. In Brucella abortus (strain S19), this protein is N-(5'-phosphoribosyl)anthranilate isomerase.